The sequence spans 118 residues: Cytochrome b-c1 complex subunit 7 (118 aa).

Residues 1 to 32 (MVHLTKTLRFINNPGFRKFYYGLQGYNKYGLY) form an igE-binding. Immunodominant epitope; induces specific IgE antibody production in mice. Causes degranulation of rat basophilic leukemia (RBL) cells and the release of beta-hexosaminidase from them region.

This sequence belongs to the UQCRB/QCR7 family. Component of the ubiquinol-cytochrome c oxidoreductase (cytochrome b-c1 complex, complex III, CIII), a multisubunit enzyme composed of 3 respiratory subunits cytochrome b, cytochrome c1 and Rieske protein, 2 core protein subunits, and additional low-molecular weight protein subunits. The complex exists as an obligatory dimer and forms supercomplexes (SCs) in the inner mitochondrial membrane with cytochrome c oxidase (complex IV, CIV).

The protein localises to the mitochondrion inner membrane. Component of the ubiquinol-cytochrome c oxidoreductase, a multisubunit transmembrane complex that is part of the mitochondrial electron transport chain which drives oxidative phosphorylation. The respiratory chain contains 3 multisubunit complexes succinate dehydrogenase (complex II, CII), ubiquinol-cytochrome c oxidoreductase (cytochrome b-c1 complex, complex III, CIII) and cytochrome c oxidase (complex IV, CIV), that cooperate to transfer electrons derived from NADH and succinate to molecular oxygen, creating an electrochemical gradient over the inner membrane that drives transmembrane transport and the ATP synthase. The cytochrome b-c1 complex catalyzes electron transfer from ubiquinol to cytochrome c, linking this redox reaction to translocation of protons across the mitochondrial inner membrane, with protons being carried across the membrane as hydrogens on the quinol. In the process called Q cycle, 2 protons are consumed from the matrix, 4 protons are released into the intermembrane space and 2 electrons are passed to cytochrome c. The polypeptide is Cytochrome b-c1 complex subunit 7 (Dermatophagoides pteronyssinus (European house dust mite)).